Reading from the N-terminus, the 332-residue chain is Elongin-A (332 aa).

An F-box domain is found at 24–68 (LEDIGHMPYALVRRVLLKMSAEQLLRLERASPALLLEDEEAWQQL). The segment at 228–332 (TPSAQPAASL…KPRVYIHTPR (105 aa)) is disordered. Positions 296–309 (LFSSPALSTLLPQQ) are enriched in polar residues. The segment covering 320 to 332 (PPKKPRVYIHTPR) has biased composition (basic residues).

Belongs to the ELA1 family. Heterodimer with ELC1. Component of a CRL3 E3 ubiquitin ligase complex consisting of a cullin, the linker protein ELC1, the substrate receptor ELA1, and a RING protein. Interacts with the large RNA polymerase II subunit RPO21 in a manner dependent on DEF1.

Its function is as follows. As part of the CRL3 E3 ubiquitin ligase complex; polyubiquitylates monoubiquitylated RNA polymerase II subunit RPO21 to trigger its proteolysis; plays a role in global genomic repair. This Eremothecium gossypii (strain ATCC 10895 / CBS 109.51 / FGSC 9923 / NRRL Y-1056) (Yeast) protein is Elongin-A (ELA1).